The primary structure comprises 160 residues: Cytochrome b6-f complex subunit 4 (160 aa).

3 consecutive transmembrane segments (helical) span residues 36–56 (LLYMFPVVILGTLSCITGLAV), 95–115 (LLGVLLMAAVPAGLLTVPFIE), and 131–151 (TVFLIGTVVAIWLGIGATLPI).

It belongs to the cytochrome b family. PetD subfamily. The 4 large subunits of the cytochrome b6-f complex are cytochrome b6, subunit IV (17 kDa polypeptide, petD), cytochrome f and the Rieske protein, while the 4 small subunits are petG, petL, petM and petN. The complex functions as a dimer.

Its subcellular location is the plastid. It localises to the chloroplast thylakoid membrane. Functionally, component of the cytochrome b6-f complex, which mediates electron transfer between photosystem II (PSII) and photosystem I (PSI), cyclic electron flow around PSI, and state transitions. In Nephroselmis olivacea (Green alga), this protein is Cytochrome b6-f complex subunit 4.